The following is a 391-amino-acid chain: Ferrochelatase (391 aa).

Positions 196 and 281 each coordinate Fe cation.

This sequence belongs to the ferrochelatase family.

It is found in the cytoplasm. It catalyses the reaction heme b + 2 H(+) = protoporphyrin IX + Fe(2+). The protein operates within porphyrin-containing compound metabolism; protoheme biosynthesis; protoheme from protoporphyrin-IX: step 1/1. Catalyzes the ferrous insertion into protoporphyrin IX. The chain is Ferrochelatase from Synechococcus sp. (strain WH7803).